The chain runs to 148 residues: Probable transporter PD_1893 (148 aa).

Helical transmembrane passes span 11–31 (FTVA…SEMI), 48–68 (NPSL…GMAL), 93–113 (IVFG…CPGP), and 118–138 (LSTG…GMII).

It belongs to the TsuA/YedE (TC 9.B.102) family.

It localises to the cell inner membrane. The protein is Probable transporter PD_1893 of Xylella fastidiosa (strain Temecula1 / ATCC 700964).